Here is a 293-residue protein sequence, read N- to C-terminus: MTVAITQTGPALQEFIKRHQRLFVLSGAGCSTDSGIPDYRDLHGGWKRPQPVTFQAFMGELSTRQRYWARSLVGWPRFGLARPNATHHALAALEARGQLELLLTQNVDRLHQAAGSQAVIDLHGRLDVVRCMGCEQRMPRTEFQLLLERDNPGWADLEAAQAPDGDADLDSVAFDNFVVPACPACGCVLKPDVVFFGENVPRERVERAFAHLQAADAVLVVGSSLMVYSGFRFVQAAARAGLPIAALNFGRTRADDLLSLKVEQSCAQALAFLQQPPDPLHTATARYHSARSA.

The Deacetylase sirtuin-type domain maps to 1 to 284 (MTVAITQTGP…QPPDPLHTAT (284 aa)). NAD(+) is bound by residues 27 to 47 (GAGC…GGWK) and 105 to 108 (QNVD). His-123 (proton acceptor) is an active-site residue. 4 residues coordinate Zn(2+): Cys-131, Cys-134, Cys-182, and Cys-185. Residues 222-224 (GSS), 248-250 (NFG), and Cys-266 each bind NAD(+).

This sequence belongs to the sirtuin family. Class II subfamily. The cofactor is Zn(2+).

The protein resides in the cytoplasm. It carries out the reaction N(6)-acetyl-L-lysyl-[protein] + NAD(+) + H2O = 2''-O-acetyl-ADP-D-ribose + nicotinamide + L-lysyl-[protein]. In terms of biological role, NAD-dependent protein deacetylase which modulates the activities of several enzymes which are inactive in their acetylated form. The sequence is that of NAD-dependent protein deacetylase from Xanthomonas campestris pv. campestris (strain B100).